The primary structure comprises 233 residues: Ras-related protein RabV (233 aa).

15-22 (GEKEVGKS) lines the GTP pocket. The short motif at 37 to 45 (YIPTIGIDF) is the Effector region element. GTP contacts are provided by residues 63 to 67 (DYVSH) and 122 to 125 (TKSD). The disordered stretch occupies residues 143–182 (QNNNNNNNNNNNNNNNNNNNNNNNNNNNNNSNNNNNNNLQ). Over residues 144–180 (NNNNNNNNNNNNNNNNNNNNNNNNNNNNNSNNNNNNN) the composition is skewed to low complexity.

The protein belongs to the small GTPase superfamily. Rab family.

The protein is Ras-related protein RabV (rabV) of Dictyostelium discoideum (Social amoeba).